A 150-amino-acid polypeptide reads, in one-letter code: D-aminoacyl-tRNA deacylase (150 aa).

The short motif at 136 to 137 (GP) is the Gly-cisPro motif, important for rejection of L-amino acids element.

This sequence belongs to the DTD family. In terms of assembly, homodimer.

The protein resides in the cytoplasm. The catalysed reaction is glycyl-tRNA(Ala) + H2O = tRNA(Ala) + glycine + H(+). It carries out the reaction a D-aminoacyl-tRNA + H2O = a tRNA + a D-alpha-amino acid + H(+). Functionally, an aminoacyl-tRNA editing enzyme that deacylates mischarged D-aminoacyl-tRNAs. Also deacylates mischarged glycyl-tRNA(Ala), protecting cells against glycine mischarging by AlaRS. Acts via tRNA-based rather than protein-based catalysis; rejects L-amino acids rather than detecting D-amino acids in the active site. By recycling D-aminoacyl-tRNA to D-amino acids and free tRNA molecules, this enzyme counteracts the toxicity associated with the formation of D-aminoacyl-tRNA entities in vivo and helps enforce protein L-homochirality. This chain is D-aminoacyl-tRNA deacylase, found in Staphylococcus aureus (strain bovine RF122 / ET3-1).